A 1987-amino-acid polypeptide reads, in one-letter code: Transcription factor 20 (1987 aa).

Positions Met1–His22 are enriched in polar residues. Disordered regions lie at residues Met1 to Gln79, Asp96 to Pro432, Leu446 to Leu481, Leu502 to Arg816, and Pro844 to Glu891. Over residues Thr51–Gly74 the composition is skewed to low complexity. Arg59 bears the Omega-N-methylarginine mark. The segment covering Gln121 to His142 has biased composition (polar residues). The span at Ser163–Gln205 shows a compositional bias: low complexity. The segment covering Pro206 to Gly235 has biased composition (polar residues). Low complexity predominate over residues Gln248–Ser277. A compositionally biased stretch (polar residues) spans Val289–Asn311. Lys316 participates in a covalent cross-link: Glycyl lysine isopeptide (Lys-Gly) (interchain with G-Cter in SUMO2). Residues Gln322 to Gln354 show a composition bias toward low complexity. Residues Met357 to Gln377 show a composition bias toward polar residues. Residues Ser396–Pro416 are compositionally biased toward low complexity. Residues Leu417 to Pro432 are compositionally biased toward polar residues. The segment covering Leu446–Pro456 has biased composition (low complexity). 2 positions are modified to phosphoserine: Ser447 and Ser458. 3 stretches are compositionally biased toward polar residues: residues Ser526–Glu537, Leu566–Thr576, and Ala585–Ala605. Residues Ser567, Ser588, Ser603, and Ser612 each carry the phosphoserine modification. The span at Thr618 to Lys627 shows a compositional bias: polar residues. Lys631 carries the N6-acetyllysine modification. The segment covering Arg645–Gln657 has biased composition (basic and acidic residues). The span at Arg666–Pro682 shows a compositional bias: polar residues. Ser669 carries the phosphoserine modification. Over residues Gly693–Ser715 the composition is skewed to low complexity. Over residues Thr722 to Pro731 the composition is skewed to polar residues. Glycyl lysine isopeptide (Lys-Gly) (interchain with G-Cter in SUMO2) cross-links involve residues Lys739, Lys762, Lys777, Lys852, Lys861, and Lys873. A compositionally biased stretch (basic and acidic residues) spans Glu761–Lys777. The residue at position 900 (Ser900) is a Phosphoserine. Glycyl lysine isopeptide (Lys-Gly) (interchain with G-Cter in SUMO2) cross-links involve residues Lys949 and Lys951. Residues Lys949 to Met1065 form a disordered region. Lys958 is covalently cross-linked (Glycyl lysine isopeptide (Lys-Gly) (interchain with G-Cter in SUMO1); alternate). Lys958 is covalently cross-linked (Glycyl lysine isopeptide (Lys-Gly) (interchain with G-Cter in SUMO2); alternate). Residues Lys974–Tyr989 show a composition bias toward basic and acidic residues. A Glycyl lysine isopeptide (Lys-Gly) (interchain with G-Cter in SUMO2) cross-link involves residue Lys985. A phosphoserine mark is found at Ser994 and Ser1033. Residue Lys1043 forms a Glycyl lysine isopeptide (Lys-Gly) (interchain with G-Cter in SUMO2) linkage. Position 1052 is an omega-N-methylarginine (Arg1052). Ser1081 carries the post-translational modification Phosphoserine. Glycyl lysine isopeptide (Lys-Gly) (interchain with G-Cter in SUMO2) cross-links involve residues Lys1114, Lys1126, Lys1165, Lys1201, Lys1206, Lys1211, Lys1238, Lys1259, Lys1295, and Lys1302. The tract at residues Val1136–Pro1372 is disordered. The span at Asp1158–Gly1170 shows a compositional bias: basic and acidic residues. Positions Leu1198–Leu1219 are leucine-zipper. A Nuclear localization signal motif is present at residues Arg1282–Lys1295. Basic and acidic residues-rich tracts occupy residues Asn1305–Asp1321 and His1332–Lys1346. A Phosphoserine modification is found at Ser1333. Lys1337 is covalently cross-linked (Glycyl lysine isopeptide (Lys-Gly) (interchain with G-Cter in SUMO2)). Residue Ser1363 is modified to Phosphoserine. Lys1366 participates in a covalent cross-link: Glycyl lysine isopeptide (Lys-Gly) (interchain with G-Cter in SUMO2). Ser1389 carries the phosphoserine modification. The tract at residues Ser1415–Glu1434 is disordered. Residues Lys1417, Lys1437, Lys1456, and Lys1474 each participate in a glycyl lysine isopeptide (Lys-Gly) (interchain with G-Cter in SUMO2) cross-link. Residues Ser1446–Gln1636 are disordered. Basic and acidic residues predominate over residues Glu1463 to Val1479. A compositionally biased stretch (polar residues) spans Thr1481–Gly1501. Residue Lys1538 forms a Glycyl lysine isopeptide (Lys-Gly) (interchain with G-Cter in SUMO2) linkage. Position 1550 is a phosphoserine (Ser1550). Residue Lys1552 forms a Glycyl lysine isopeptide (Lys-Gly) (interchain with G-Cter in SUMO2) linkage. The segment at residues Gly1565–Lys1579 is a DNA-binding region (a.T hook). The segment covering Gln1584–Met1594 has biased composition (pro residues). The Nuclear localization signal signature appears at Lys1604 to Gln1628. The span at Lys1606–Lys1627 shows a compositional bias: basic residues. A Glycyl lysine isopeptide (Lys-Gly) (interchain with G-Cter in SUMO2) cross-link involves residue Lys1641. 2 disordered regions span residues Gln1685–Leu1710 and Thr1760–Leu1865. A Phosphoserine modification is found at Ser1697. 3 positions are modified to phosphothreonine: Thr1699, Thr1790, and Thr1792. The Nuclear localization signal motif lies at Arg1812–Ser1819. Residues Asp1850–Ser1859 show a composition bias toward polar residues. The segment at Pro1856–Ile1892 adopts a C2HC pre-PHD-type; degenerate zinc-finger fold. Residues Met1912 to Lys1960 form a PHD-type zinc finger. A disordered region spans residues Pro1966–Gly1987. Over residues Gln1971 to Gly1987 the composition is skewed to polar residues.

Homodimer. Interacts with RNF4 and JUN. Binds to the regulatory region of MMP3. As to expression, expressed in brain, lung, liver, kidney and testes.

Its subcellular location is the nucleus. Transcriptional activator that binds to the regulatory region of MMP3 and thereby controls stromelysin expression. It stimulates the activity of various transcriptional activators such as JUN, SP1, PAX6 and ETS1, suggesting a function as a coactivator. This is Transcription factor 20 (Tcf20) from Mus musculus (Mouse).